Reading from the N-terminus, the 250-residue chain is Silencing boundary-establishment protein FUB1 (250 aa).

The segment at 179 to 250 (PDWSGGLPNP…GFGGSGSGFI (72 aa)) is disordered. The span at 202–213 (PNRRPAPRREDM) shows a compositional bias: basic and acidic residues. Residues 229–250 (PGSGGFGGSGSGGFGGSGSGFI) are compositionally biased toward gly residues.

This sequence belongs to the proteasome inhibitor PI31 family. In terms of assembly, interacts with the 20S proteasome.

Its function is as follows. Plays a role in the establishment of transcriptional silencing boundaries, preventing the propagation of heterochromatic silencing. The protein is Silencing boundary-establishment protein FUB1 of Saccharomyces cerevisiae (strain ATCC 204508 / S288c) (Baker's yeast).